The sequence spans 963 residues: Reversion-inducing cysteine-rich protein with Kazal motifs (963 aa).

Residues 1–28 (MAAAVAAWPWALFCLAAVPPLLSPGAAG) form the signal peptide. Residues 31–78 (CCYHAKDNLMCRDVCEQILSSKSDSRLKHLLQRAPEYCPESMGEVWGC) form a Knot 1 repeat. Residues 31 to 332 (CCYHAKDNLM…NAVEVSMLTC (302 aa)) are 5 X Knot repeats. A glycan (N-linked (GlcNAc...) asparagine) is linked at asparagine 80. Knot repeat units follow at residues 98-135 (CCELAIAVECRQACKQASSKNDILKVCRKEYENALFSC) and 145-191 (CCSY…LIHC). Asparagine 194 carries N-linked (GlcNAc...) asparagine glycosylation. Knot repeat units lie at residues 210 to 257 (CCDR…LWQC) and 286 to 332 (CCSK…MLTC). 2 N-linked (GlcNAc...) asparagine glycosylation sites follow: asparagine 291 and asparagine 346. Kazal-like domains are found at residues 621–667 (KFTG…SCIS), 692–746 (SFGK…PCQP), and 749–783 (KSVEPVCGHNGETYSSVCAAYSDRVAVDYYGHCQA). 6 disulfide bridges follow: cysteine 627-cysteine 652, cysteine 629-cysteine 648, cysteine 637-cysteine 665, cysteine 710-cysteine 729, cysteine 718-cysteine 744, and cysteine 755-cysteine 781. Serine 936 carries GPI-anchor amidated serine lipidation. A propeptide spanning residues 937–963 (PSVKVGPVLHCLFISFSFTLLKLMDYI) is cleaved from the precursor.

It belongs to the RECK family. As to quaternary structure, interacts (via knot repeats) with WNT7A (via disordered linker region); the interaction is direct. Interacts (via knot repeats) with WNT7B (via disordered linker region); the interaction is direct. Interacts with ADGRA2; the interaction is direct. Post-translationally, localizes to the plasma membrane via its GPI-anchor. Released from the plasma membrane following cleavage of the GPI-anchor by GDPD5/GPE2.

The protein resides in the cell membrane. Its function is as follows. Functions together with ADGRA2 to enable brain endothelial cells to selectively respond to Wnt7 signals (WNT7A or WNT7B). Plays a key role in Wnt7-specific responses: required for central nervous system (CNS) angiogenesis and blood-brain barrier regulation. Acts as a Wnt7-specific coactivator of canonical Wnt signaling by decoding Wnt ligands: acts by interacting specifically with the disordered linker region of Wnt7, thereby conferring ligand selectivity for Wnt7. ADGRA2 is then required to deliver RECK-bound Wnt7 to frizzled by assembling a higher-order RECK-ADGRA2-Fzd-LRP5-LRP6 complex. Also acts as a serine protease inhibitor. The chain is Reversion-inducing cysteine-rich protein with Kazal motifs from Gallus gallus (Chicken).